A 250-amino-acid polypeptide reads, in one-letter code: MADS-box transcription factor 47 (250 aa).

Positions 1–10 (MAGGGGGGGR) are enriched in gly residues. Disordered regions lie at residues 1–20 (MAGG…AATG) and 196–250 (SRME…FSSK). Positions 11-20 (GEGEGRAATG) are enriched in basic and acidic residues. The 61-residue stretch at 20 to 80 (GKRERIAIRR…GKLFQFASTS (61 aa)) folds into the MADS-box domain. The K-box domain maps to 106–198 (QGEDSSTCAR…QLQVSRMSRM (93 aa)). Residues 214–224 (GQSSESVTNAS) show a composition bias toward polar residues.

May interact with MADS18. In terms of tissue distribution, expressed in roots, shoots and developing panicles. Expressed in mature stems and leaves, flowering panicles, developing seeds, and mature seeds.

It localises to the nucleus. In terms of biological role, transcription factor that modulates expressions of multiple genes involved in cell signaling and gene transcription. Plays a negative regulatory role in brassinosteroid signaling. The sequence is that of MADS-box transcription factor 47 from Oryza sativa subsp. japonica (Rice).